A 436-amino-acid polypeptide reads, in one-letter code: Bifunctional IPC transferase and DIPP synthase (436 aa).

The mobA-like NTP transferase stretch occupies residues 11–241 (GVGAAVLAAG…LSEEMVLGWA (231 aa)). CTP contacts are provided by residues 17 to 19 (LAA) and Lys32. The CDP-alcohol phosphatidyltransferases stretch occupies residues 242 to 435 (ASGNDGPVSR…RRLLALKRGR (194 aa)). The next 3 membrane-spanning stretches (helical) occupy residues 275-295 (VSLLSFALAALGAGLLAAGRL), 349-371 (AGTRLAAAAGYPALAGALLVSYT), and 397-417 (LAVLALGGLLGAPGAALLATG).

The protein in the N-terminal section; belongs to the MobA family. It in the C-terminal section; belongs to the CDP-alcohol phosphatidyltransferase class-I family.

The protein resides in the membrane. It carries out the reaction 1D-myo-inositol 3-phosphate + CTP + H(+) = CDP-1L-myo-inositol + diphosphate. The enzyme catalyses CDP-1L-myo-inositol + 1D-myo-inositol 3-phosphate = bis(1L-myo-inositol) 3,1'-phosphate 1-phosphate + CMP + H(+). In terms of biological role, involved in biosynthesis of di-myo-inositol phosphate (DIP), a widespread organic solute in microorganisms adapted to hot environments. Catalyzes the condensation of CTP and L-myo-inositol-1-phosphate into CDP-L-myo-inositol, as well as the biosynthesis of di-myo-inositol-1,3'-phosphate-1'-phosphate (DIPP) from CDP-L-myo-inositol and L-myo-inositol-1-phosphate. The polypeptide is Bifunctional IPC transferase and DIPP synthase (Rubrobacter xylanophilus (strain DSM 9941 / JCM 11954 / NBRC 16129 / PRD-1)).